We begin with the raw amino-acid sequence, 3432 residues long: Genome polyprotein (3432 aa).

An interaction with host EXOC1 region spans residues 2-15 (TKKPGGPGKNRAIN). Topologically, residues 2-109 (TKKPGGPGKN…RKQNKRGGNE (108 aa)) are cytoplasmic. The segment at 37–72 (LLDGRGPVRFVLALITFFKFTALAPTKALLGRWKAV) is hydrophobic; homodimerization of capsid protein C. The propeptide at 106–127 (GGNEGSIMWLASLAVVIACAGA) is ER anchor for the capsid protein C, removed in mature form by serine protease NS3. The chain crosses the membrane as a helical span at residues 110 to 130 (GSIMWLASLAVVIACAGAMKL). The Extracellular segment spans residues 131 to 253 (SNFQGKLLMT…ATRYLMKTEN (123 aa)). N-linked (GlcNAc...) asparagine; by host glycosylation is present at N142. The helical transmembrane segment at 254-274 (WIIRNPGYAFLAAVLGWMLGS) threads the bilayer. The Cytoplasmic segment spans residues 275–279 (NNGQR). A helical transmembrane segment spans residues 280–294 (VVFTILLLLVAPAYS). The Extracellular segment spans residues 295–746 (FNCLGMGNRD…QVFGGAFRTL (452 aa)). Cystine bridges form between C297/C324, C354/C410, C354/C415, C368/C399, C386/C410, and C386/C415. The fusion peptide stretch occupies residues 392 to 405 (DRGWGNGCGLFGKG). N448 carries an N-linked (GlcNAc...) asparagine; by host glycan. Intrachain disulfides connect C484/C581 and C598/C629. The chain crosses the membrane as a helical span at residues 747 to 767 (FGGMSWITQGLMGALLLWMGV). Topologically, residues 768-773 (NARDRS) are cytoplasmic. The helical transmembrane segment at 774–794 (IALAFLATGGVLVFLATNVHA) threads the bilayer. The Extracellular portion of the chain corresponds to 795–1219 (DTGCAIDITR…AFAEANSGGD (425 aa)). 6 cysteine pairs are disulfide-bonded: C798-C809, C849-C937, C973-C1017, C1074-C1123, C1085-C1106, and C1107-C1110. N-linked (GlcNAc...) asparagine; by host glycans are attached at residues N924 and N1001. Residues 1220-1240 (VLHLALIAVFKIQPAFLVMNM) traverse the membrane as a helical segment. Residues 1241–1250 (LSTRWTNQEN) are Cytoplasmic-facing. The helical transmembrane segment at 1251–1271 (VVLVLGAAFFQLASVDLQIGV) threads the bilayer. A topological domain (lumenal) is located at residue H1272. A helical transmembrane segment spans residues 1273 to 1293 (GILNAAAIAWMIVRAITFPTT). At 1294-1309 (SSVTMPVLALLTPGMR) the chain is on the cytoplasmic side. The helical transmembrane segment at 1310-1330 (ALYLDTYRIILLVIGICSLLH) threads the bilayer. Residues 1331 to 1341 (ERKKTMAKKKG) are Lumenal-facing. Residues 1342–1362 (AVLLGLALTSTGWFSPTTIAA) traverse the membrane as a helical segment. Over 1363-1374 (GLMVCNPNKKRG) the chain is Cytoplasmic. Residues 1375–1395 (WPATEFLSAVGLMFAIVGGLA) traverse the membrane as a helical segment. Topologically, residues 1396-1398 (ELD) are lumenal. A helical membrane pass occupies residues 1399–1419 (IESMSIPFMLAGLMAVSYVVS). The Cytoplasmic portion of the chain corresponds to 1420–1476 (GKATDMWLERAADISWEMDAAITGSSRRLDVKLDDDGDFHLIDDPGVPWKVWVLRMS). An interacts with and activates NS3 protease region spans residues 1427–1466 (LERAADISWEMDAAITGSSRRLDVKLDDDGDFHLIDDPGV). An intramembrane region (helical) is located at residues 1477–1497 (CIGLAALTPWAIVPAAFGYWL). Over 1498–2173 (TLKTTKRGGV…RMALEELPDA (676 aa)) the chain is Cytoplasmic. Residues 1505 to 1682 (GGVFWDTPSP…DRQEEPVPEA (178 aa)) form the Peptidase S7 domain. Catalysis depends on charge relay system; for serine protease NS3 activity residues H1555, D1579, and S1639. The Helicase ATP-binding domain occupies 1685–1841 (PNMLRKRQMT…DSNAPIHDLQ (157 aa)). The segment at 1689–1692 (RKRQ) is important for RNA-binding. Residue 1698 to 1705 (LHPGSGKT) coordinates ATP. Positions 1789–1792 (DEAH) match the DEAH box motif. Positions 1852–2017 (GYEWITEYAG…GLVAQLYGPE (166 aa)) constitute a Helicase C-terminal domain. K1893 bears the N6-acetyllysine; by host mark. Positions 1950 to 1972 (NPSPITSASAAQRRGRVGRNPNQ) are disordered. The tract at residues 2168–2172 (EELPD) is regulates the ATPase activity of NS3 helicase. The helical transmembrane segment at 2174-2194 (LETITLIVAITVMTGGFFLLM) threads the bilayer. Residues 2195-2199 (MQRKG) are Lumenal-facing. The segment at residues 2200–2220 (IGKMGLGALVLTLATFFLWAA) is an intramembrane region (helical). Position 2221 (E2221) is a topological domain, lumenal. A helical membrane pass occupies residues 2222–2242 (VPGTKIAGTLLIALLLMVVLI). Residues 2243–2257 (PEPEKQRSQTDNQLA) lie on the Cytoplasmic side of the membrane. A helical membrane pass occupies residues 2258–2278 (VFLICVLTVVGVVAANEYGML). The Lumenal segment spans residues 2279–2311 (EKTKADLKSMFGGKTQASGLTGLPSMALDLRPA). The helical intramembrane region spans 2312-2332 (TAWALYGGSTVVLTPLLKHLI). The Lumenal portion of the chain corresponds to 2333-2368 (TSEYVTTSLASINSQAGSLFVLPRGVPFTDLDLTVG). A helical membrane pass occupies residues 2369 to 2389 (LVFLGCWGQITLTTFLTAMVL). Over 2390–2444 (ATLHYGYMLPGWQAEALRAAQRRTAAGIMKNAVVDGMVATDVPELERTTPLMQKK) the chain is Cytoplasmic. Residues 2445 to 2465 (VGQVLLIGVSVAAFLVNPNVT) traverse the membrane as a helical segment. The Lumenal segment spans residues 2466–2469 (TVRE). Residues 2470-2490 (AGVLVTAATLTLWDNGASAVW) form a helical membrane-spanning segment. The Cytoplasmic segment spans residues 2491–3432 (NSTTATGLCH…DVLIQEDRVI (942 aa)). The 266-residue stretch at 2528-2793 (GRPGGRTLGE…DVNLGSGTRA (266 aa)) folds into the mRNA cap 0-1 NS5-type MT domain. Residue S2583 participates in S-adenosyl-L-methionine binding. Position 2583 is a phosphoserine (S2583). The active-site For 2'-O-MTase activity is the K2588. S-adenosyl-L-methionine is bound by residues G2613, W2614, T2631, K2632, D2658, and V2659. Catalysis depends on D2673, which acts as the For 2'-O-MTase activity. Residue I2674 coordinates S-adenosyl-L-methionine. Catalysis depends on for 2'-O-MTase activity residues K2709 and E2745. S-adenosyl-L-methionine is bound at residue Y2747. Residues E2967, H2971, C2976, and C2979 each contribute to the Zn(2+) site. Positions 3057 to 3209 (GKMYADDTAG…KPLDDRFATA (153 aa)) constitute a RdRp catalytic domain. Residues H3244, C3260, and C3379 each coordinate Zn(2+).

The protein in the N-terminal section; belongs to the class I-like SAM-binding methyltransferase superfamily. mRNA cap 0-1 NS5-type methyltransferase family. In terms of assembly, homodimer. Interacts (via N-terminus) with host EXOC1 (via C-terminus); this interaction results in EXOC1 degradation through the proteasome degradation pathway. As to quaternary structure, forms heterodimers with envelope protein E in the endoplasmic reticulum and Golgi. Homodimer; in the endoplasmic reticulum and Golgi. Interacts with protein prM. Interacts with non-structural protein 1. Interacts with host HSPA5. In terms of assembly, homodimer; Homohexamer when secreted. Interacts with envelope protein E. NS1 interacts with NS4B. Interacts with host complement protein CFH; this interaction leads to the degradation of C3. As to quaternary structure, interacts (via N-terminus) with serine protease NS3. Forms a heterodimer with serine protease NS3. May form homooligomers. In terms of assembly, forms a heterodimer with NS2B. Interacts with non-structural protein 2A (via N-terminus). Interacts with NS4B. Interacts with unphosphorylated RNA-directed RNA polymerase NS5; this interaction stimulates RNA-directed RNA polymerase NS5 guanylyltransferase activity. Interacts with host ILF2. As to quaternary structure, interacts with serine protease NS3. Homodimer. Interacts with host STAT2; this interaction inhibits the phosphorylation of the latter, and, when all viral proteins are present (polyprotein), targets STAT2 for degradation. Interacts with serine protease NS3. It depends on Mn(2+) as a cofactor. Mg(2+) is required as a cofactor. Specific enzymatic cleavages in vivo yield mature proteins. Cleavages in the lumen of endoplasmic reticulum are performed by host signal peptidase, whereas cleavages in the cytoplasmic side are performed by serine protease NS3. Signal cleavage at the 2K-4B site requires a prior NS3 protease-mediated cleavage at the 4A-2K site. Post-translationally, cleaved in post-Golgi vesicles by a host furin, releasing the mature small envelope protein M, and peptide pr. This cleavage is incomplete as up to 30% of viral particles still carry uncleaved prM. In terms of processing, N-glycosylated. N-glycosylated. The excreted form is glycosylated and this is required for efficient secretion of the protein from infected cells. Post-translationally, acetylated by host KAT5. Acetylation modulates NS3 RNA-binding and unwinding activities and plays an important positive role for viral replication. In terms of processing, phosphorylated on serines residues. This phosphorylation may trigger NS5 nuclear localization.

It is found in the virion. Its subcellular location is the host nucleus. The protein resides in the host cytoplasm. The protein localises to the host perinuclear region. It localises to the secreted. It is found in the virion membrane. Its subcellular location is the host endoplasmic reticulum membrane. The protein resides in the host cell surface. It catalyses the reaction Selective hydrolysis of -Xaa-Xaa-|-Yaa- bonds in which each of the Xaa can be either Arg or Lys and Yaa can be either Ser or Ala.. The catalysed reaction is RNA(n) + a ribonucleoside 5'-triphosphate = RNA(n+1) + diphosphate. The enzyme catalyses a ribonucleoside 5'-triphosphate + H2O = a ribonucleoside 5'-diphosphate + phosphate + H(+). It carries out the reaction ATP + H2O = ADP + phosphate + H(+). It catalyses the reaction a 5'-end (5'-triphosphoguanosine)-ribonucleoside in mRNA + S-adenosyl-L-methionine = a 5'-end (N(7)-methyl 5'-triphosphoguanosine)-ribonucleoside in mRNA + S-adenosyl-L-homocysteine. The catalysed reaction is a 5'-end (N(7)-methyl 5'-triphosphoguanosine)-ribonucleoside in mRNA + S-adenosyl-L-methionine = a 5'-end (N(7)-methyl 5'-triphosphoguanosine)-(2'-O-methyl-ribonucleoside) in mRNA + S-adenosyl-L-homocysteine + H(+). In terms of biological role, plays a role in virus budding by binding to the cell membrane and gathering the viral RNA into a nucleocapsid that forms the core of a mature virus particle. During virus entry, may induce genome penetration into the host cytoplasm after hemifusion induced by the surface proteins. Can migrate to the cell nucleus where it modulates host functions. Overcomes the anti-viral effects of host EXOC1 by sequestering and degrading the latter through the proteasome degradation pathway. Functionally, inhibits RNA silencing by interfering with host Dicer. Prevents premature fusion activity of envelope proteins in trans-Golgi by binding to envelope protein E at pH6.0. After virion release in extracellular space, gets dissociated from E dimers. Its function is as follows. Acts as a chaperone for envelope protein E during intracellular virion assembly by masking and inactivating envelope protein E fusion peptide. prM is the only viral peptide matured by host furin in the trans-Golgi network probably to avoid catastrophic activation of the viral fusion activity in acidic Golgi compartment prior to virion release. prM-E cleavage is inefficient, and many virions are only partially matured. These uncleaved prM would play a role in immune evasion. In terms of biological role, may play a role in virus budding. Exerts cytotoxic effects by activating a mitochondrial apoptotic pathway through M ectodomain. May display a viroporin activity. Functionally, binds to host cell surface receptor and mediates fusion between viral and cellular membranes. Efficient virus attachment to cell is, at least in part, mediated by host HSPA5. Envelope protein is synthesized in the endoplasmic reticulum in the form of heterodimer with protein prM. They play a role in virion budding in the ER, and the newly formed immature particle is covered with 60 spikes composed of heterodimer between precursor prM and envelope protein E. The virion is transported to the Golgi apparatus where the low pH causes dissociation of PrM-E heterodimers and formation of E homodimers. prM-E cleavage is inefficient, and many virions are only partially matured. These uncleaved prM would play a role in immune evasion. Involved in immune evasion, pathogenesis and viral replication. Once cleaved off the polyprotein, is targeted to three destinations: the viral replication cycle, the plasma membrane and the extracellular compartment. Essential for viral replication. Required for formation of the replication complex and recruitment of other non-structural proteins to the ER-derived membrane structures. Excreted as a hexameric lipoparticle that plays a role against host immune response. Antagonizing the complement function. Binds to the host macrophages and dendritic cells. Inhibits signal transduction originating from Toll-like receptor 3 (TLR3). Its function is as follows. Component of the viral RNA replication complex that functions in virion assembly and antagonizes the host alpha/beta interferon antiviral response. In terms of biological role, required cofactor for the serine protease function of NS3. May have membrane-destabilizing activity and form viroporins. Functionally, displays three enzymatic activities: serine protease, NTPase and RNA helicase. NS3 serine protease, in association with NS2B, performs its autocleavage and cleaves the polyprotein at dibasic sites in the cytoplasm: C-prM, NS2A-NS2B, NS2B-NS3, NS3-NS4A, NS4A-2K and NS4B-NS5. NS3 RNA helicase binds RNA and unwinds dsRNA in the 3' to 5' direction. Regulates the ATPase activity of the NS3 helicase activity. NS4A allows NS3 helicase to conserve energy during unwinding. Its function is as follows. Functions as a signal peptide for NS4B and is required for the interferon antagonism activity of the latter. In terms of biological role, induces the formation of ER-derived membrane vesicles where the viral replication takes place. Inhibits interferon (IFN)-induced host STAT1 phosphorylation and nuclear translocation, thereby preventing the establishment of cellular antiviral state by blocking the IFN-alpha/beta pathway. Inhibits STAT2 translocation in the nucleus after IFN-alpha treatment. Functionally, replicates the viral (+) and (-) RNA genome. Performs the capping of genomes in the cytoplasm. NS5 methylates viral RNA cap at guanine N-7 and ribose 2'-O positions. Besides its role in RNA genome replication, also prevents the establishment of cellular antiviral state by blocking the interferon-alpha/beta (IFN-alpha/beta) signaling pathway. Inhibits host TYK2 and STAT2 phosphorylation, thereby preventing activation of JAK-STAT signaling pathway. The sequence is that of Genome polyprotein from Ardeidae (herons).